A 246-amino-acid chain; its full sequence is Exosome complex component Rrp41 (246 aa).

The protein belongs to the RNase PH family. Rrp41 subfamily. As to quaternary structure, component of the archaeal exosome complex. Forms a hexameric ring-like arrangement composed of 3 Rrp41-Rrp42 heterodimers. The hexameric ring associates with a trimer of Rrp4 and/or Csl4 subunits.

The protein localises to the cytoplasm. In terms of biological role, catalytic component of the exosome, which is a complex involved in RNA degradation. Has 3'-&gt;5' exoribonuclease activity. Can also synthesize heteromeric RNA-tails. The protein is Exosome complex component Rrp41 of Pyrobaculum islandicum (strain DSM 4184 / JCM 9189 / GEO3).